The sequence spans 85 residues: Toxin To9 (85 aa).

An N-terminal signal peptide occupies residues 1-19; the sequence is MNYSTLIAVASLLTAGTES. The LCN-type CS-alpha/beta domain occupies 21-81; it reads KDGYPVKEGD…AAIKGYGRCR (61 aa). 4 disulfides stabilise this stretch: Cys31–Cys80, Cys35–Cys56, Cys42–Cys63, and Cys46–Cys65. Pro82 carries the post-translational modification Proline amide.

This sequence belongs to the long (4 C-C) scorpion toxin superfamily. Sodium channel inhibitor family. Alpha subfamily. In terms of tissue distribution, expressed by the venom gland.

The protein localises to the secreted. Its function is as follows. Alpha toxins bind voltage-independently at site-3 of sodium channels (Nav) and inhibit the inactivation of the activated channels, thereby blocking neuronal transmission. This is Toxin To9 from Tityus obscurus (Amazonian scorpion).